A 1476-amino-acid polypeptide reads, in one-letter code: ABC-type transporter FG02316 (1476 aa).

Asn-2 carries an N-linked (GlcNAc...) asparagine glycan. A run of 10 helical transmembrane segments spans residues 23–43, 64–84, 97–117, 156–176, 266–286, 305–325, 384–404, 407–427, 485–505, and 532–552; these read FTLLFEESILVVPITALLLLA, WLYCKIILCLLLLASQIAFLV, SLPAAALSIVASITLLGLSYV, AAITALISTVVKILMLSAETI, ILFIIFPRLCFIGFTFCQPFL, QGYGLIGAWFLVFIGLAVTTG, VWANLIEIVIAVYLLGRQLGL, LIPVGAAIFSIVGSVIAVSFV, LLIWNMVLAYLAPIFAPVLSF, and LFALLQEPLASFVTSLSSFMG. One can recognise an ABC transmembrane type-1 1 domain in the interval 274–552; the sequence is LCFIGFTFCQ…FVTSLSSFMG (279 aa). The interval 586–615 is disordered; the sequence is ISGVSSSEEKHPVSPIQESMMKTEPSGDSP. The region spanning 622-847 is the ABC transporter 1 domain; it reads IRNASFGYDR…SDNYVSHSDV (226 aa). A glycan (N-linked (GlcNAc...) asparagine) is linked at Asn-624. 654-661 contributes to the ATP binding site; sequence GPVGSGKS. N-linked (GlcNAc...) asparagine glycans are attached at residues Asn-682, Asn-696, Asn-798, and Asn-836. Residues 842–870 form a disordered region; that stretch reads VSHSDVSSPDGARSKAPSSGPASSSAPVP. The span at 855–870 shows a compositional bias: low complexity; that stretch reads SKAPSSGPASSSAPVP. The next 6 helical transmembrane spans lie at 906 to 926, 950 to 970, 1021 to 1041, 1045 to 1065, 1137 to 1157, and 1167 to 1187; these read MNAIGWIPTMVFVLAICAYIF, LGYYLGVYAMLGALSIIFLVL, LIDMDLPLSALNTFATFVLCI, ILIAVGSYYTAIAFPFLLATL, WLTLVLDMIVTIIAVLVVVLV, and GLIGVALVNIIQFSQHLKLLM. The ABC transmembrane type-1 2 domain maps to 916–1195; that stretch reads VFVLAICAYI…LMTFWTTLET (280 aa). Residues 1232-1464 enclose the ABC transporter 2 domain; sequence ILFDQVSAGY…GPDASTFASM (233 aa). Asn-1250 carries an N-linked (GlcNAc...) asparagine glycan. An ATP-binding site is contributed by 1265 to 1272; sequence GRTGSGKS. An N-linked (GlcNAc...) asparagine glycan is attached at Asn-1414.

This sequence belongs to the ABC transporter superfamily. ABCC family. Conjugate transporter (TC 3.A.1.208) subfamily.

It is found in the cell membrane. Functionally, ABC-type transporter; part of the gene cluster that mediates the biosynthesis of the fusahexin, a cyclic hydrophobic hexapeptide with the amino acid sequence cyclo-(D-Ala-L-Leu-D-allo-Thr-L-Pro-D-Leu-L-Leu) that plays an important role in cell surface hydrophobicity. This chain is ABC-type transporter FG02316, found in Gibberella zeae (strain ATCC MYA-4620 / CBS 123657 / FGSC 9075 / NRRL 31084 / PH-1) (Wheat head blight fungus).